Consider the following 221-residue polypeptide: Immediate early response gene 2 protein (221 aa).

M1 is subject to N-acetylmethionine. The segment at E105 to P155 is disordered. A compositionally biased stretch (low complexity) spans S125 to V136.

This sequence belongs to the IER family.

The protein localises to the cytoplasm. The protein resides in the nucleus. In terms of biological role, DNA-binding protein that seems to act as a transcription factor. Involved in the regulation of neuronal differentiation, acts upon JNK-signaling pathway activation and plays a role in neurite outgrowth in hippocampal cells. May mediate with FIBP FGF-signaling in the establishment of laterality in the embryo. Promotes cell motility, seems to stimulate tumor metastasis. This Mus musculus (Mouse) protein is Immediate early response gene 2 protein (Ier2).